The primary structure comprises 142 residues: Hemoglobin subunit beta-C (142 aa).

The Globin domain maps to 2 to 142; that stretch reads PNKALITGFW…VASALAHRYH (141 aa). Heme b is bound by residues histidine 59 and histidine 88.

This sequence belongs to the globin family. Heterotetramer of two alpha chains and two beta chains. Red blood cells.

Functionally, involved in oxygen transport from the lung to the various peripheral tissues. This chain is Hemoglobin subunit beta-C (HBBC), found in Ovis aries (Sheep).